The chain runs to 403 residues: Subtilisin-like protease CPC735_035780 (403 aa).

Residues 1–19 (MSIMKIATLFFAALSAVEA) form the signal peptide. The propeptide occupies 20–117 (AKLLTPSDKR…VEPDRRVHLT (98 aa)). One can recognise an Inhibitor I9 domain in the interval 35–116 (SYIVVMKDNV…YVEPDRRVHL (82 aa)). A Peptidase S8 domain is found at 127 to 403 (SWGLGRISHR…NKLLYNNSGR (277 aa)). Residues D159 and H190 each act as charge relay system in the active site. N-linked (GlcNAc...) asparagine glycans are attached at residues N233 and N251. The active-site Charge relay system is S349. An N-linked (GlcNAc...) asparagine glycan is attached at N399.

It belongs to the peptidase S8 family.

The protein resides in the secreted. Functionally, secreted subtilisin-like serine protease with keratinolytic activity that contributes to pathogenicity. The chain is Subtilisin-like protease CPC735_035780 from Coccidioides posadasii (strain C735) (Valley fever fungus).